A 113-amino-acid chain; its full sequence is Small ribosomal subunit protein bS6 (113 aa).

The protein belongs to the bacterial ribosomal protein bS6 family.

Binds together with bS18 to 16S ribosomal RNA. In Vesicomyosocius okutanii subsp. Calyptogena okutanii (strain HA), this protein is Small ribosomal subunit protein bS6.